The following is a 270-amino-acid chain: uncharacterized protein (270 aa).

The protein to T.pallidum TP_0127, TP_0315 and TP_0618.

This is an uncharacterized protein from Treponema pallidum (strain Nichols).